Here is a 469-residue protein sequence, read N- to C-terminus: Regulator of G-protein signaling 7 (469 aa).

Residues 37–112 enclose the DEP domain; sequence EKNGIPIRTV…DDGTFYRFQT (76 aa). A phosphoserine mark is found at Ser-229 and Ser-241. The interval 235 to 256 is disordered; the sequence is NDIRSHSPTHTPTPETKPPTED. Thr-243 carries the post-translational modification Phosphothreonine. One can recognise a G protein gamma domain in the interval 255-316; that stretch reads EDELQQQIKY…LSDDTTFWEL (62 aa). Positions 333–448 constitute an RGS domain; that stretch reads GMDEALKDPV…IRSSAYQELL (116 aa). Phosphoserine is present on Ser-434.

As to quaternary structure, interacts with GNB5, forming the RGS7-GNB5 complex. Interacts with GPR158; promotes the GTPase activator activity of the RGS7-GNB5 complex in absence of glycine, in contrast GTPase activator activity of the RGS7-GNB5 complex is inhibited in presence of glycine. Interacts with GPR179. Interacts with PKD1; this prevents rapid proteasomal degradation. Interacts with RGS7BP, leading to regulate the subcellular location of the heterodimer formed with GNB5. Interacts (phosphorylated form) with 14-3-3 protein YWHAQ. Interacts with SNAPIN. Interacts with GNAI1. Interacts with GNAO1, GNAI3 and GNAZ. Palmitoylated. In terms of processing, ubiquitinated, leading to rapid proteasomal degradation. Post-translationally, phosphorylation and subsequent interaction with 14-3-3 proteins inhibits GAP activity. As to expression, detected in retina (at protein level).

The protein localises to the cytoplasm. Its subcellular location is the cytosol. The protein resides in the cell membrane. It is found in the membrane. In terms of biological role, GTPase activator component of the RGS7-GNB5 complex that regulates G protein-coupled receptor signaling cascades. The RGS7-GNB5 complex acts as an inhibitor signal transduction by promoting the GTPase activity of G protein alpha subunits, such as GNAO1, thereby driving them into their inactive GDP-bound form. May play a role in synaptic vesicle exocytosis. Glycine-dependent regulation of the RGS7-GNB5 complex by GPR158 affects mood and cognition via its ability to regulate neuronal excitability in L2/L3 pyramidal neurons of the prefrontal cortex. Modulates the activity of potassium channels that are activated by GNAO1 in response to muscarinic acetylcholine receptor M2/CHRM2 signaling. This Bos taurus (Bovine) protein is Regulator of G-protein signaling 7 (RGS7).